Reading from the N-terminus, the 227-residue chain is Cytochrome c oxidase subunit 2 (227 aa).

The Mitochondrial intermembrane portion of the chain corresponds to 1 to 14 (MAHPVQLGLQDATS). Residues 15–45 (PVMEELITFHDQALMAMFLISFLILYALSST) form a helical membrane-spanning segment. Over 46-59 (LTTKLTNTNITDAQ) the chain is Mitochondrial matrix. A helical transmembrane segment spans residues 60-87 (EMETIWTILPAVILILIALPSLRILYMT). Residues 88–227 (DEINNPSFTI…IFEMGPVFTL (140 aa)) are Mitochondrial intermembrane-facing. Residues His161, Cys196, Glu198, Cys200, His204, and Met207 each coordinate Cu cation. Glu198 is a binding site for Mg(2+).

The protein belongs to the cytochrome c oxidase subunit 2 family. In terms of assembly, component of the cytochrome c oxidase (complex IV, CIV), a multisubunit enzyme composed of 14 subunits. The complex is composed of a catalytic core of 3 subunits MT-CO1, MT-CO2 and MT-CO3, encoded in the mitochondrial DNA, and 11 supernumerary subunits COX4I, COX5A, COX5B, COX6A, COX6B, COX6C, COX7A, COX7B, COX7C, COX8 and NDUFA4, which are encoded in the nuclear genome. The complex exists as a monomer or a dimer and forms supercomplexes (SCs) in the inner mitochondrial membrane with NADH-ubiquinone oxidoreductase (complex I, CI) and ubiquinol-cytochrome c oxidoreductase (cytochrome b-c1 complex, complex III, CIII), resulting in different assemblies (supercomplex SCI(1)III(2)IV(1) and megacomplex MCI(2)III(2)IV(2)). Found in a complex with TMEM177, COA6, COX18, COX20, SCO1 and SCO2. Interacts with TMEM177 in a COX20-dependent manner. Interacts with COX20. Interacts with COX16. The cofactor is Cu cation.

The protein resides in the mitochondrion inner membrane. It catalyses the reaction 4 Fe(II)-[cytochrome c] + O2 + 8 H(+)(in) = 4 Fe(III)-[cytochrome c] + 2 H2O + 4 H(+)(out). In terms of biological role, component of the cytochrome c oxidase, the last enzyme in the mitochondrial electron transport chain which drives oxidative phosphorylation. The respiratory chain contains 3 multisubunit complexes succinate dehydrogenase (complex II, CII), ubiquinol-cytochrome c oxidoreductase (cytochrome b-c1 complex, complex III, CIII) and cytochrome c oxidase (complex IV, CIV), that cooperate to transfer electrons derived from NADH and succinate to molecular oxygen, creating an electrochemical gradient over the inner membrane that drives transmembrane transport and the ATP synthase. Cytochrome c oxidase is the component of the respiratory chain that catalyzes the reduction of oxygen to water. Electrons originating from reduced cytochrome c in the intermembrane space (IMS) are transferred via the dinuclear copper A center (CU(A)) of subunit 2 and heme A of subunit 1 to the active site in subunit 1, a binuclear center (BNC) formed by heme A3 and copper B (CU(B)). The BNC reduces molecular oxygen to 2 water molecules using 4 electrons from cytochrome c in the IMS and 4 protons from the mitochondrial matrix. The sequence is that of Cytochrome c oxidase subunit 2 (MT-CO2) from Papio anubis (Olive baboon).